The primary structure comprises 463 residues: MPAAPRAASASPAAVAPGSDPVVSIDSLDMEARGVGRLVNEDGTPGKVIFVEGALPGETVSYKSFRRKPSYEQAHLLEVRRESVMRVKPGCKHFGVCGGCSMQHLDSRAQLAIKQRVLEDNLWHLSKVRPEVMFRPIAGPDWGYRYRARLTVRYVAKKGGVLVGFHERKSSYVADMTSCEILPPHISAMLVPLRELVTGLSIRDRMPQIELAVGHEVTALVLRILEPLTDADKDLLRAFADQHNVQFWLQPKGPDTVVPFYPLDRELAYTLPEFGIRMPFKPTDFTQVNHHINRVLIGRALRLLDVQPQDRLLDLFCGIGNFTLPLATQGRSVMGIEGSEALTTRALANAGYNGLAEKTEFACRNLFEVTAEDIAALGRFDRWLIDPPREGALAVCKALGELSQQGSDVLPQRIVYVSCSPATLARDAGLLVHEAGYRLAGAGVVNMFPHTSHVESIAVFERR.

Residues 14 to 78 form the TRAM domain; sequence AVAPGSDPVV…PSYEQAHLLE (65 aa). [4Fe-4S] cluster contacts are provided by cysteine 91, cysteine 97, cysteine 100, and cysteine 179. Residues glutamine 287, phenylalanine 316, asparagine 321, glutamate 337, asparagine 365, and aspartate 386 each contribute to the S-adenosyl-L-methionine site. The active-site Nucleophile is the cysteine 419.

It belongs to the class I-like SAM-binding methyltransferase superfamily. RNA M5U methyltransferase family. RlmD subfamily.

It catalyses the reaction uridine(1939) in 23S rRNA + S-adenosyl-L-methionine = 5-methyluridine(1939) in 23S rRNA + S-adenosyl-L-homocysteine + H(+). In terms of biological role, catalyzes the formation of 5-methyl-uridine at position 1939 (m5U1939) in 23S rRNA. The sequence is that of 23S rRNA (uracil(1939)-C(5))-methyltransferase RlmD from Cupriavidus pinatubonensis (strain JMP 134 / LMG 1197) (Cupriavidus necator (strain JMP 134)).